Reading from the N-terminus, the 56-residue chain is Botcinic acid biosynthesis cluster B protein 14 (56 aa).

The protein operates within polyketide biosynthesis. In terms of biological role, part of the gene cluster B that mediates the biosynthesis of botcinic acid and its botcinin derivatives, acetate-derived polyketides that contribute to virulence when combined with the sesquiterpene botrydial. Botcinic acid and its derivatives have been shown to induce chlorosis and necrosis during host plant infection, but also have antifungal activities. Two polyketide synthases, BOA6 and BOA9, are involved in the biosynthesis of botcinins. BOA6 mediates the formation of the per-methylated tetraketide core by condensation of four units of malonyl-CoA with one unit of acetyl-CoA, which would be methylated in activated methylene groups to yield a bicyclic acid intermediate that could then either be converted to botrylactone derivatives or lose the starter acetate unit through a retro-Claisen type C-C bond cleavage to yield botcinin derivatives. The second polyketide synthase, BOA9, is probably required for the biosynthesis of the tetraketide side chain of botcinins. The methyltransferase (MT) domain within BOA6 is probably responsible for the incorporation of four methyl groups. The trans-enoyl reductase BOA5 might take over the enoyl reductase function of BOA6 that misses an ER domain. The monooxygenases BOA2, BOA3 and BOA4 might be involved in further hydroxylations at C4, C5 and C8, whereas BOA7, close to BOA9, could potentially be involved in the hydroxylation at C4 in the side chain of botcinins. In Botryotinia fuckeliana (strain B05.10) (Noble rot fungus), this protein is Botcinic acid biosynthesis cluster B protein 14.